Consider the following 1147-residue polypeptide: ATP-dependent helicase/deoxyribonuclease subunit B (1147 aa).

An ATP-binding site is contributed by 8–15 (GRAGSGKS). Residues C786, C1106, C1109, and C1115 each contribute to the [4Fe-4S] cluster site.

Belongs to the helicase family. AddB/RexB type 1 subfamily. As to quaternary structure, heterodimer of AddA and AddB. Requires Mg(2+) as cofactor. [4Fe-4S] cluster is required as a cofactor.

The heterodimer acts as both an ATP-dependent DNA helicase and an ATP-dependent, dual-direction single-stranded exonuclease. Recognizes the chi site generating a DNA molecule suitable for the initiation of homologous recombination. The AddB subunit has 5' -&gt; 3' nuclease activity but not helicase activity. The protein is ATP-dependent helicase/deoxyribonuclease subunit B of Clostridium botulinum (strain Loch Maree / Type A3).